We begin with the raw amino-acid sequence, 436 residues long: Probable G-protein coupled receptor C06G4.5 (436 aa).

Topologically, residues 1 to 53 (MSTNLVDYVDDSYLNQSMNSENGLDSVTQIMYDMKKYNIVNDVLPPPNHEDLH) are extracellular. The N-linked (GlcNAc...) asparagine glycan is linked to N15. A helical transmembrane segment spans residues 54–74 (VVIMAVSYLLLFLLGTCGNVA). Residues 75 to 94 (VLTTIYHVIRSSRATLDNTL) lie on the Cytoplasmic side of the membrane. The chain crosses the membrane as a helical span at residues 95-115 (IYVIVLSCVDFGVCLSLPITV). At 116–132 (IDQILGFWMFGKIPCKL) the chain is on the extracellular side. The chain crosses the membrane as a helical span at residues 133 to 153 (HAVFENFGKILSALILTAMSF). At 154-171 (DRYAGVCHPQRKRLRSRN) the chain is on the cytoplasmic side. A helical transmembrane segment spans residues 172–192 (FAITILLVLAVYAFITLCPLL). Residues 193–230 (WSFTAREIILYAKETAPGMLTRMKIEKCTVDIDSQMFT) are Extracellular-facing. Residues 231 to 251 (AFTIYQFILCYCTPLVLIAFF) form a helical membrane-spanning segment. Residues 252 to 281 (YTKLLSKLREHTRTFKSSQIPFLHISLYTL) lie on the Cytoplasmic side of the membrane. The chain crosses the membrane as a helical span at residues 282–302 (AVACFYFLCWTPFWMATLFAV). Residues 303-316 (YLENSANSSSVPPV) are Extracellular-facing. An N-linked (GlcNAc...) asparagine glycan is attached at N309. Residues 317 to 337 (FVYIMYFIHALPFTNSAINWI) form a helical membrane-spanning segment. At 338–436 (LYGALNGQLQ…LLSNHNPTFL (99 aa)) the chain is on the cytoplasmic side.

Belongs to the G-protein coupled receptor 1 family.

The protein resides in the cell membrane. Functionally, putative receptor. This chain is Probable G-protein coupled receptor C06G4.5, found in Caenorhabditis elegans.